The following is a 270-amino-acid chain: Interleukin-1 beta (270 aa).

Residues 1 to 118 constitute a propeptide that is removed on maturation; sequence MATVPEPTSE…VYDDDAFVCD (118 aa).

It belongs to the IL-1 family. In terms of assembly, monomer. In its precursor form, weakly interacts with full-length MEFV; the mature cytokine does not interact at all. Interacts with integrins ITGAV:ITGBV and ITGA5:ITGB1; integrin-binding is required for IL1B signaling. Interacts with cargo receptor TMED10; the interaction is direct and is required for the secretion of IL1B mature form. Interacts with HSP90AB1; the interaction facilitates cargo translocation into the ERGIC. Interacts with HSP90B1; the interaction facilitates cargo translocation into the ERGIC.

The protein localises to the cytoplasm. The protein resides in the cytosol. It localises to the secreted. Its subcellular location is the lysosome. It is found in the extracellular exosome. Functionally, potent pro-inflammatory cytokine. Initially discovered as the major endogenous pyrogen, induces prostaglandin synthesis, neutrophil influx and activation, T-cell activation and cytokine production, B-cell activation and antibody production, and fibroblast proliferation and collagen production. Promotes Th17 differentiation of T-cells. Synergizes with IL12/interleukin-12 to induce IFNG synthesis from T-helper 1 (Th1) cells. Plays a role in angiogenesis by inducing VEGF production synergistically with TNF and IL6. Involved in transduction of inflammation downstream of pyroptosis: its mature form is specifically released in the extracellular milieu by passing through the gasdermin-D (GSDMD) pore. This chain is Interleukin-1 beta (IL1B), found in Phoca vitulina richardii (Pacific harbor seal).